A 309-amino-acid chain; its full sequence is NAD kinase 2 (309 aa).

The active-site Proton acceptor is aspartate 81. NAD(+)-binding positions include 81–82 (DG), 155–156 (NE), aspartate 185, 196–201 (TAYALS), and asparagine 255.

The protein belongs to the NAD kinase family. A divalent metal cation serves as cofactor.

It localises to the cytoplasm. The enzyme catalyses NAD(+) + ATP = ADP + NADP(+) + H(+). Involved in the regulation of the intracellular balance of NAD and NADP, and is a key enzyme in the biosynthesis of NADP. Catalyzes specifically the phosphorylation on 2'-hydroxyl of the adenosine moiety of NAD to yield NADP. The chain is NAD kinase 2 from Gloeobacter violaceus (strain ATCC 29082 / PCC 7421).